The chain runs to 406 residues: Formate-dependent phosphoribosylglycinamide formyltransferase (406 aa).

N(1)-(5-phospho-beta-D-ribosyl)glycinamide contacts are provided by residues 27-28 (EL) and E87. Residues R120, K162, 167–172 (SSGKGQ), 202–205 (EGFI), and E210 contribute to the ATP site. In terms of domain architecture, ATP-grasp spans 125-320 (RLAAETLGLP…EFELHARALL (196 aa)). Mg(2+)-binding residues include E279 and E291. N(1)-(5-phospho-beta-D-ribosyl)glycinamide is bound by residues D298, K367, and 374–375 (RR).

This sequence belongs to the PurK/PurT family. As to quaternary structure, homodimer.

It carries out the reaction N(1)-(5-phospho-beta-D-ribosyl)glycinamide + formate + ATP = N(2)-formyl-N(1)-(5-phospho-beta-D-ribosyl)glycinamide + ADP + phosphate + H(+). The protein operates within purine metabolism; IMP biosynthesis via de novo pathway; N(2)-formyl-N(1)-(5-phospho-D-ribosyl)glycinamide from N(1)-(5-phospho-D-ribosyl)glycinamide (formate route): step 1/1. In terms of biological role, involved in the de novo purine biosynthesis. Catalyzes the transfer of formate to 5-phospho-ribosyl-glycinamide (GAR), producing 5-phospho-ribosyl-N-formylglycinamide (FGAR). Formate is provided by PurU via hydrolysis of 10-formyl-tetrahydrofolate. In Bordetella parapertussis (strain 12822 / ATCC BAA-587 / NCTC 13253), this protein is Formate-dependent phosphoribosylglycinamide formyltransferase.